Consider the following 250-residue polypeptide: Ribosome-inactivating protein luffin-B (250 aa).

The active site involves E160.

This sequence belongs to the ribosome-inactivating protein family. Type 1 RIP subfamily.

The catalysed reaction is Endohydrolysis of the N-glycosidic bond at one specific adenosine on the 28S rRNA.. This Luffa aegyptiaca (Sponge gourd) protein is Ribosome-inactivating protein luffin-B.